The sequence spans 83 residues: ATP synthase subunit c (83 aa).

A run of 2 helical transmembrane segments spans residues 9–29 (LICV…GIGI) and 51–71 (MVFM…GLVI).

This sequence belongs to the ATPase C chain family. F-type ATPases have 2 components, F(1) - the catalytic core - and F(0) - the membrane proton channel. F(1) has five subunits: alpha(3), beta(3), gamma(1), delta(1), epsilon(1). F(0) has three main subunits: a(1), b(2) and c(10-14). The alpha and beta chains form an alternating ring which encloses part of the gamma chain. F(1) is attached to F(0) by a central stalk formed by the gamma and epsilon chains, while a peripheral stalk is formed by the delta and b chains.

The protein resides in the cell inner membrane. F(1)F(0) ATP synthase produces ATP from ADP in the presence of a proton or sodium gradient. F-type ATPases consist of two structural domains, F(1) containing the extramembraneous catalytic core and F(0) containing the membrane proton channel, linked together by a central stalk and a peripheral stalk. During catalysis, ATP synthesis in the catalytic domain of F(1) is coupled via a rotary mechanism of the central stalk subunits to proton translocation. Functionally, key component of the F(0) channel; it plays a direct role in translocation across the membrane. A homomeric c-ring of between 10-14 subunits forms the central stalk rotor element with the F(1) delta and epsilon subunits. In Desulfotalea psychrophila (strain LSv54 / DSM 12343), this protein is ATP synthase subunit c.